The following is a 544-amino-acid chain: E3 ubiquitin-protein ligase makorin-3 (544 aa).

Disordered regions lie at residues 1–46 (MEES…VSSA) and 117–144 (DLSGRRRSRGGQDAQPRASADRGPKMAT). Low complexity-rich tracts occupy residues 9-19 (EAHAAAGAEAG) and 36-46 (AAGASAGVSSA). 2 consecutive C3H1-type zinc fingers follow at residues 92 to 119 (WTKQILCRYYLHGQCKEGDNCRYSHDLS) and 274 to 301 (PMPLPLCRYAARGQCLRGDRCAYPHGEI). The tract at residues 302–329 (CDMCGQQALHPWDAAQQEAHRRACVEAH) is makorin-type Cys-His. The RING-type zinc-finger motif lies at 347–401 (CGICMEVVYEKADPSDRRFGILFSCNHTYCLRCIRRWRSATQFENRISKSCPQCR). Residues 430-459 (GMSQKACRYFAGGLGHCPFGEFCFYKHEYP) form a C3H1-type 3 zinc finger.

Mainly expressed in mouse brain and reproductive system including testis and ovary. Ubiquitously detected at low levels throughout the entire embryo, but expression is highest in the ventricular layers of the brain.

The protein localises to the nucleus. The enzyme catalyses S-ubiquitinyl-[E2 ubiquitin-conjugating enzyme]-L-cysteine + [acceptor protein]-L-lysine = [E2 ubiquitin-conjugating enzyme]-L-cysteine + N(6)-ubiquitinyl-[acceptor protein]-L-lysine.. Its pathway is protein modification; protein ubiquitination. In terms of biological role, E3 ubiquitin ligase catalyzing the covalent attachment of ubiquitin moieties onto substrate proteins. Acts as a key developmental timer that helps ensure puberty begins at the appropriate age, by inhibiting premature activation of the reproductive hormone cascade. Epigenetically regulates GNRH1 transcription by disrupting the binding of methyl-DNA binding protein 3/MBD3 to the promoter of GNRH1. Mechanistically, mediates the non-proteolytic ubiquitination of MBD3 at multiple sites with 'Lys27' ubiquitin linkages and thereby regulates the methylation status of the genome, including GNRH1 promoter. Modulates the stability and translation of GNRH1 mRNA by mediating the non-proteolytic ubiquitination of PABP family members PABPC1, PABPC3 and PABPC4 at multiple sites. Also participates in the maintenance of genomic and epigenomic stability by regulating the abundance of APEX2 via 'Lys-48'-linked ubiquitination. The chain is E3 ubiquitin-protein ligase makorin-3 (Mkrn3) from Mus musculus (Mouse).